The primary structure comprises 88 residues: Cytochrome c oxidase subunit 6B2 (88 aa).

Residues 1 to 21 (MLGVQAQMPAPGQWTTPPFDP) form a disordered region. The 47-residue stretch at 29-75 (TRNCYQNFLDYHRCVKTMDRRGKNTQACDYYFRVFHSLCPVSWVQRW) folds into the CHCH domain. A Cx9C motif motif is present at residues 32 to 42 (CYQNFLDYHRC). 2 disulfide bridges follow: Cys32/Cys67 and Cys42/Cys56. The short motif at 56 to 67 (CDYYFRVFHSLC) is the Cx10C motif element.

The protein belongs to the cytochrome c oxidase subunit 6B family. In terms of assembly, component of the cytochrome c oxidase (complex IV, CIV), a multisubunit enzyme composed of 14 subunits. The complex is composed of a catalytic core of 3 subunits MT-CO1, MT-CO2 and MT-CO3, encoded in the mitochondrial DNA, and 11 supernumerary subunits COX4I, COX5A, COX5B, COX6A, COX6B, COX6C, COX7A, COX7B, COX7C, COX8 and NDUFA4, which are encoded in the nuclear genome. The complex exists as a monomer or a dimer and forms supercomplexes (SCs) in the inner mitochondrial membrane with NADH-ubiquinone oxidoreductase (complex I, CI) and ubiquinol-cytochrome c oxidoreductase (cytochrome b-c1 complex, complex III, CIII), resulting in different assemblies (supercomplex SCI(1)III(2)IV(1) and megacomplex MCI(2)III(2)IV(2)). As to expression, testis specific.

Its subcellular location is the mitochondrion inner membrane. It participates in energy metabolism; oxidative phosphorylation. In terms of biological role, component of the cytochrome c oxidase, the last enzyme in the mitochondrial electron transport chain which drives oxidative phosphorylation. The respiratory chain contains 3 multisubunit complexes succinate dehydrogenase (complex II, CII), ubiquinol-cytochrome c oxidoreductase (cytochrome b-c1 complex, complex III, CIII) and cytochrome c oxidase (complex IV, CIV), that cooperate to transfer electrons derived from NADH and succinate to molecular oxygen, creating an electrochemical gradient over the inner membrane that drives transmembrane transport and the ATP synthase. Cytochrome c oxidase is the component of the respiratory chain that catalyzes the reduction of oxygen to water. Electrons originating from reduced cytochrome c in the intermembrane space (IMS) are transferred via the dinuclear copper A center (CU(A)) of subunit 2 and heme A of subunit 1 to the active site in subunit 1, a binuclear center (BNC) formed by heme A3 and copper B (CU(B)). The BNC reduces molecular oxygen to 2 water molecules using 4 electrons from cytochrome c in the IMS and 4 protons from the mitochondrial matrix. In Rattus norvegicus (Rat), this protein is Cytochrome c oxidase subunit 6B2 (Cox6b2).